A 478-amino-acid polypeptide reads, in one-letter code: ATP synthase subunit beta (478 aa).

Residue 151–158 (GGAGVGKT) participates in ATP binding.

This sequence belongs to the ATPase alpha/beta chains family. As to quaternary structure, F-type ATPases have 2 components, CF(1) - the catalytic core - and CF(0) - the membrane proton channel. CF(1) has five subunits: alpha(3), beta(3), gamma(1), delta(1), epsilon(1). CF(0) has three main subunits: a(1), b(2) and c(9-12). The alpha and beta chains form an alternating ring which encloses part of the gamma chain. CF(1) is attached to CF(0) by a central stalk formed by the gamma and epsilon chains, while a peripheral stalk is formed by the delta and b chains.

Its subcellular location is the cell inner membrane. The catalysed reaction is ATP + H2O + 4 H(+)(in) = ADP + phosphate + 5 H(+)(out). Functionally, produces ATP from ADP in the presence of a proton gradient across the membrane. The catalytic sites are hosted primarily by the beta subunits. The polypeptide is ATP synthase subunit beta (Azorhizobium caulinodans (strain ATCC 43989 / DSM 5975 / JCM 20966 / LMG 6465 / NBRC 14845 / NCIMB 13405 / ORS 571)).